Here is a 184-residue protein sequence, read N- to C-terminus: UPF0149 protein PputW619_5026 (184 aa).

This sequence belongs to the UPF0149 family.

In Pseudomonas putida (strain W619), this protein is UPF0149 protein PputW619_5026.